We begin with the raw amino-acid sequence, 484 residues long: Arachin Ahy-3 (484 aa).

Residues 1-20 (MAKLLALSVCFCFLVLGASS) form the signal peptide. 2 disulfide bridges follow: cysteine 32–cysteine 65 and cysteine 108–cysteine 305. Positions 35–253 (QRLNAQRPDN…GFQVNEDIVR (219 aa)) constitute a Cupin type-1 1 domain. Positions 208-233 (QQRSGRQSPKGEEQEQEQENEGGNVF) are disordered. A propeptide spanning residues 295 to 298 (DFNN) is cleaved from the precursor. The 150-residue stretch at 311–460 (MNIGKSTSAD…SYGLQYEQAR (150 aa)) folds into the Cupin type-1 2 domain. Positions 479–484 (MIRTVA) are excised as a propeptide.

Belongs to the 11S seed storage protein (globulins) family. As to quaternary structure, hexamer; each subunit is composed of an acidic and a basic chain derived from a single precursor and linked by a disulfide bond.

The polypeptide is Arachin Ahy-3 (Arachis hypogaea (Peanut)).